A 330-amino-acid chain; its full sequence is tRNA (guanine(37)-N(1))-methyltransferase Trm5b (330 aa).

S-adenosyl-L-methionine contacts are provided by residues Arg173, 211-212 (DI), 238-239 (DS), and Asn252.

It belongs to the class I-like SAM-binding methyltransferase superfamily. TRM5/TYW2 family.

The protein resides in the cytoplasm. It catalyses the reaction guanosine(37) in tRNA + S-adenosyl-L-methionine = N(1)-methylguanosine(37) in tRNA + S-adenosyl-L-homocysteine + H(+). Specifically methylates the N1 position of guanosine-37 in various tRNAs. This Pyrococcus abyssi (strain GE5 / Orsay) protein is tRNA (guanine(37)-N(1))-methyltransferase Trm5b.